The sequence spans 389 residues: Chitinase-3-like protein 1 (389 aa).

Positions 1 to 29 (MHTSTEARMGMRAALTGFAVLMLLQSCSA) are cleaved as a signal peptide. A GH18 domain is found at 30-389 (YKLVCYFTSW…LTNAIKDALA (360 aa)). Cysteines 34 and 59 form a disulfide. N-linked (GlcNAc...) asparagine glycosylation is present at Asn-68. Chitin contacts are provided by residues 79 to 80 (EW), 106 to 109 (GGWK), Tyr-150, and 213 to 216 (MTYD). Cys-309 and Cys-372 are joined by a disulfide. The tract at residues 333 to 347 (QWVGYEDKESVKNKV) is important for AKT1 activation and IL8 production. Trp-361 provides a ligand contact to chitin.

This sequence belongs to the glycosyl hydrolase 18 family. In terms of assembly, monomer. In terms of tissue distribution, detected in lung in pulmonary macrophages and alveolar type 2 cells and in bronchoalveolar lavage (BAL) fluids. Expressed in mammary tumor cells (at protein level). Expressed in lung. Not detected in non-inflammatory colon.

It is found in the secreted. It localises to the extracellular space. Its subcellular location is the cytoplasm. The protein resides in the endoplasmic reticulum. Carbohydrate-binding lectin with a preference for chitin. Has no chitinase activity. May play a role in tissue remodeling and in the capacity of cells to respond to and cope with changes in their environment. Plays a role in T-helper cell type 2 (Th2) inflammatory response and IL-13-induced inflammation, regulating allergen sensitization, inflammatory cell apoptosis, dendritic cell accumulation and M2 macrophage differentiation. Facilitates invasion of pathogenic enteric bacteria into colonic mucosa and lymphoid organs. Mediates activation of AKT1 signaling pathway and subsequent IL8 production in colonic epithelial cells. Regulates antibacterial responses in lung by contributing to macrophage bacterial killing, controlling bacterial dissemination and augmenting host tolerance. Also regulates hyperoxia-induced injury, inflammation and epithelial apoptosis in lung. The polypeptide is Chitinase-3-like protein 1 (Chi3l1) (Mus musculus (Mouse)).